The following is a 473-amino-acid chain: Ribosomal RNA small subunit methyltransferase F (473 aa).

S-adenosyl-L-methionine contacts are provided by residues 123-129 (AAAPGSK), Glu-147, Asp-174, and Asp-192. The Nucleophile role is filled by Cys-245.

It belongs to the class I-like SAM-binding methyltransferase superfamily. RsmB/NOP family.

The protein localises to the cytoplasm. It carries out the reaction cytidine(1407) in 16S rRNA + S-adenosyl-L-methionine = 5-methylcytidine(1407) in 16S rRNA + S-adenosyl-L-homocysteine + H(+). In terms of biological role, specifically methylates the cytosine at position 1407 (m5C1407) of 16S rRNA. This chain is Ribosomal RNA small subunit methyltransferase F, found in Vibrio cholerae serotype O1 (strain ATCC 39315 / El Tor Inaba N16961).